The primary structure comprises 288 residues: Energy-coupling factor transporter ATP-binding protein EcfA2 (288 aa).

Positions isoleucine 3–glycine 243 constitute an ABC transporter domain. ATP is bound at residue glycine 40–serine 47.

This sequence belongs to the ABC transporter superfamily. Energy-coupling factor EcfA family. In terms of assembly, forms a stable energy-coupling factor (ECF) transporter complex composed of 2 membrane-embedded substrate-binding proteins (S component), 2 ATP-binding proteins (A component) and 2 transmembrane proteins (T component).

Its subcellular location is the cell membrane. Its function is as follows. ATP-binding (A) component of a common energy-coupling factor (ECF) ABC-transporter complex. Unlike classic ABC transporters this ECF transporter provides the energy necessary to transport a number of different substrates. This Symbiobacterium thermophilum (strain DSM 24528 / JCM 14929 / IAM 14863 / T) protein is Energy-coupling factor transporter ATP-binding protein EcfA2.